A 75-amino-acid polypeptide reads, in one-letter code: uncharacterized protein (75 aa).

Helical transmembrane passes span 5-25 (VIIC…IFEI) and 42-62 (VAIF…GSVL).

It is found in the membrane. This is an uncharacterized protein from Saccharomyces cerevisiae (strain ATCC 204508 / S288c) (Baker's yeast).